We begin with the raw amino-acid sequence, 360 residues long: Serine/threonine-protein kinase SAPK4 (360 aa).

In terms of domain architecture, Protein kinase spans 4-260 (YEAVRDIGSG…MKEIKSHPWF (257 aa)). ATP is bound by residues 10–18 (IGSGNFGVA) and K33. D123 (proton acceptor) is an active-site residue. A disordered region spans residues 303-360 (TMPKSSRTGYWSDAGSDEEEKEEEERPEENEEEEEDEYDKRVKEVHASGELRMSSLRI). The segment covering 317 to 339 (GSDEEEKEEEERPEENEEEEEDE) has biased composition (acidic residues). Positions 340–351 (YDKRVKEVHASG) are enriched in basic and acidic residues.

Belongs to the protein kinase superfamily. Ser/Thr protein kinase family. In terms of processing, may be phosphorylated. As to expression, expressed in leaf blades, leaf sheaths and roots. Expressed in shoots and roots of young seedlings.

It carries out the reaction L-seryl-[protein] + ATP = O-phospho-L-seryl-[protein] + ADP + H(+). The enzyme catalyses L-threonyl-[protein] + ATP = O-phospho-L-threonyl-[protein] + ADP + H(+). With respect to regulation, activated by hyperosmotic stress. In terms of biological role, may play a role in signal transduction of hyperosmotic response. In Oryza sativa subsp. japonica (Rice), this protein is Serine/threonine-protein kinase SAPK4 (SAPK4).